We begin with the raw amino-acid sequence, 603 residues long: Dual specificity protein phosphatase CDC14A (603 aa).

The a stretch occupies residues 7-162; it reads ELIGACEFMK…GLQHGFFDFE (156 aa). The tract at residues 163 to 176 is linker; that stretch reads TFDAEEYEHYERVE. Residues 177 to 343 form a b region; sequence NGDFNWIVPG…QGDIFRSKLK (167 aa). In terms of domain architecture, Tyrosine-protein phosphatase spans 179–336; sequence DFNWIVPGKF…KQASLWVQGD (158 aa). Cys278 functions as the Phosphocysteine intermediate in the catalytic mechanism. Ser484 carries the post-translational modification Phosphoserine. Positions 518–538 are enriched in polar residues; it reads NGSTQTPGRNYPELNNNQYTR. The segment at 518 to 583 is disordered; that stretch reads NGSTQTPGRN…RPSFPGSLSS (66 aa). 2 stretches are compositionally biased toward low complexity: residues 539–558 and 573–583; these read SSNSNSSSSSSGLGGNLNSS and LRPSFPGSLSS. At Ser592 the chain carries Phosphoserine.

Belongs to the protein-tyrosine phosphatase family. Non-receptor class CDC14 subfamily. In terms of assembly, interacts with KIF20A. Interaction is required to localize CDC14 to the midzone of the mitotic spindle. As to expression, expressed in the inner ear.

It localises to the nucleus. It is found in the cytoplasm. The protein resides in the cytoskeleton. The protein localises to the microtubule organizing center. Its subcellular location is the centrosome. It localises to the spindle. It is found in the cell projection. The protein resides in the kinocilium. The protein localises to the spindle pole. Its subcellular location is the stereocilium. The catalysed reaction is O-phospho-L-tyrosyl-[protein] + H2O = L-tyrosyl-[protein] + phosphate. It carries out the reaction O-phospho-L-seryl-[protein] + H2O = L-seryl-[protein] + phosphate. The enzyme catalyses O-phospho-L-threonyl-[protein] + H2O = L-threonyl-[protein] + phosphate. Dual-specificity phosphatase. Required for centrosome separation and productive cytokinesis during cell division. Dephosphorylates SIRT2 around early anaphase. May dephosphorylate the APC subunit FZR1/CDH1, thereby promoting APC-FZR1 dependent degradation of mitotic cyclins and subsequent exit from mitosis. Required for normal hearing. The polypeptide is Dual specificity protein phosphatase CDC14A (Cdc14a) (Mus musculus (Mouse)).